We begin with the raw amino-acid sequence, 344 residues long: Holliday junction branch migration complex subunit RuvB (344 aa).

Positions 1–185 (MTERSDRDVS…FGFTAHMDFY (185 aa)) are large ATPase domain (RuvB-L). ATP-binding positions include leucine 24, arginine 25, glycine 66, lysine 69, threonine 70, serine 71, 132-134 (EDF), arginine 175, tyrosine 185, and arginine 222. Threonine 70 contributes to the Mg(2+) binding site. Residues 186-256 (EPAELERVLA…VAKAALEVYD (71 aa)) form a small ATPAse domain (RuvB-S) region. Positions 259–344 (ELGLDRLDRA…VGASQPGLFE (86 aa)) are head domain (RuvB-H). The DNA site is built by arginine 314 and arginine 319.

Belongs to the RuvB family. As to quaternary structure, homohexamer. Forms an RuvA(8)-RuvB(12)-Holliday junction (HJ) complex. HJ DNA is sandwiched between 2 RuvA tetramers; dsDNA enters through RuvA and exits via RuvB. An RuvB hexamer assembles on each DNA strand where it exits the tetramer. Each RuvB hexamer is contacted by two RuvA subunits (via domain III) on 2 adjacent RuvB subunits; this complex drives branch migration. In the full resolvosome a probable DNA-RuvA(4)-RuvB(12)-RuvC(2) complex forms which resolves the HJ.

Its subcellular location is the cytoplasm. The catalysed reaction is ATP + H2O = ADP + phosphate + H(+). Functionally, the RuvA-RuvB-RuvC complex processes Holliday junction (HJ) DNA during genetic recombination and DNA repair, while the RuvA-RuvB complex plays an important role in the rescue of blocked DNA replication forks via replication fork reversal (RFR). RuvA specifically binds to HJ cruciform DNA, conferring on it an open structure. The RuvB hexamer acts as an ATP-dependent pump, pulling dsDNA into and through the RuvAB complex. RuvB forms 2 homohexamers on either side of HJ DNA bound by 1 or 2 RuvA tetramers; 4 subunits per hexamer contact DNA at a time. Coordinated motions by a converter formed by DNA-disengaged RuvB subunits stimulates ATP hydrolysis and nucleotide exchange. Immobilization of the converter enables RuvB to convert the ATP-contained energy into a lever motion, pulling 2 nucleotides of DNA out of the RuvA tetramer per ATP hydrolyzed, thus driving DNA branch migration. The RuvB motors rotate together with the DNA substrate, which together with the progressing nucleotide cycle form the mechanistic basis for DNA recombination by continuous HJ branch migration. Branch migration allows RuvC to scan DNA until it finds its consensus sequence, where it cleaves and resolves cruciform DNA. The protein is Holliday junction branch migration complex subunit RuvB of Mycobacterium tuberculosis (strain ATCC 25177 / H37Ra).